Here is a 585-residue protein sequence, read N- to C-terminus: MQLDFRNINTLWSSIIVETLSRLGLTTAVICPGSRSTPLTVAFASHSKIDTIPILDERSAAFFALGIAKRTHLPVALICTSGTAGANFYPAVIEGKESQVPLLIFTADRPPELRNCHAGQTIDQVKLYGNYCNWYIELSLPSVEIRLLSYLRQTIIAAWDHALVPYKGIVHLNCPFREPLAPIIEPNIASLCTEVNFDNFFLNIYESNKKRLRTDYLYDHLNHWLSQANGIIIAGVGNSNNTDLYCNQIFRLSTLLNYPVLAEALCPFRNHAQGFPNLINTYDILLRNQKLADELVPDVVIQIGEFPTSKQLREWLTHHQVQHWVIDSRPDSLDPLHNNTYYIRTDIHDLEMEYNKQCIPGKQDLSYLQQWKKINKIINRNIKTTLDKTNELIEAKLPFILSKNLQDKTSIFIANSMPVRYAEFFWMPNKGQFMPYFNRGANGIEGTLSTALGVAYKAKSSLLITGDLALLHDTNGWLIRQHFQGHLTIILINNNGGGIFEMLPIAKEESVFESYFATPQNINFSQLCSTYNVEHILIKNWTQLKRLLNPLPSTGIRVLELQTDRKKDALWLQDNMKKLSMIDNK.

The protein belongs to the TPP enzyme family. MenD subfamily. In terms of assembly, homodimer. The cofactor is Mg(2+). Requires Mn(2+) as cofactor. Thiamine diphosphate is required as a cofactor.

The enzyme catalyses isochorismate + 2-oxoglutarate + H(+) = 5-enolpyruvoyl-6-hydroxy-2-succinyl-cyclohex-3-ene-1-carboxylate + CO2. Its pathway is quinol/quinone metabolism; 1,4-dihydroxy-2-naphthoate biosynthesis; 1,4-dihydroxy-2-naphthoate from chorismate: step 2/7. It participates in cofactor biosynthesis; phylloquinone biosynthesis. Catalyzes the thiamine diphosphate-dependent decarboxylation of 2-oxoglutarate and the subsequent addition of the resulting succinic semialdehyde-thiamine pyrophosphate anion to isochorismate to yield 2-succinyl-5-enolpyruvyl-6-hydroxy-3-cyclohexene-1-carboxylate (SEPHCHC). The polypeptide is 2-succinyl-5-enolpyruvyl-6-hydroxy-3-cyclohexene-1-carboxylate synthase (Crocosphaera subtropica (strain ATCC 51142 / BH68) (Cyanothece sp. (strain ATCC 51142))).